Reading from the N-terminus, the 208-residue chain is FMN-dependent NADH:quinone oxidoreductase (208 aa).

Residues serine 9, 15 to 17 (SAS), 96 to 99 (MYNF), and 140 to 143 (TRGG) contribute to the FMN site.

This sequence belongs to the azoreductase type 1 family. In terms of assembly, homodimer. FMN is required as a cofactor.

It carries out the reaction 2 a quinone + NADH + H(+) = 2 a 1,4-benzosemiquinone + NAD(+). It catalyses the reaction N,N-dimethyl-1,4-phenylenediamine + anthranilate + 2 NAD(+) = 2-(4-dimethylaminophenyl)diazenylbenzoate + 2 NADH + 2 H(+). In terms of biological role, quinone reductase that provides resistance to thiol-specific stress caused by electrophilic quinones. Its function is as follows. Also exhibits azoreductase activity. Catalyzes the reductive cleavage of the azo bond in aromatic azo compounds to the corresponding amines. This is FMN-dependent NADH:quinone oxidoreductase from Ralstonia nicotianae (strain ATCC BAA-1114 / GMI1000) (Ralstonia solanacearum).